Reading from the N-terminus, the 188-residue chain is Transcription factor FapR (188 aa).

It belongs to the FapR family.

Functionally, transcriptional factor involved in regulation of membrane lipid biosynthesis by repressing genes involved in fatty acid and phospholipid metabolism. This is Transcription factor FapR from Bacillus licheniformis (strain ATCC 14580 / DSM 13 / JCM 2505 / CCUG 7422 / NBRC 12200 / NCIMB 9375 / NCTC 10341 / NRRL NRS-1264 / Gibson 46).